We begin with the raw amino-acid sequence, 382 residues long: Anhydro-N-acetylmuramic acid kinase (382 aa).

22–29 (GTSMDGVD) contacts ATP.

Belongs to the anhydro-N-acetylmuramic acid kinase family.

The enzyme catalyses 1,6-anhydro-N-acetyl-beta-muramate + ATP + H2O = N-acetyl-D-muramate 6-phosphate + ADP + H(+). It participates in amino-sugar metabolism; 1,6-anhydro-N-acetylmuramate degradation. It functions in the pathway cell wall biogenesis; peptidoglycan recycling. In terms of biological role, catalyzes the specific phosphorylation of 1,6-anhydro-N-acetylmuramic acid (anhMurNAc) with the simultaneous cleavage of the 1,6-anhydro ring, generating MurNAc-6-P. Is required for the utilization of anhMurNAc either imported from the medium or derived from its own cell wall murein, and thus plays a role in cell wall recycling. The protein is Anhydro-N-acetylmuramic acid kinase of Burkholderia lata (strain ATCC 17760 / DSM 23089 / LMG 22485 / NCIMB 9086 / R18194 / 383).